The chain runs to 383 residues: MNHSKTLLLTAAAGLMLTCGAVSSQAKHKLSDPYHFTVNAAAETEPVDTAGDAADDPAIWLDPKTPQNSKLITTNKKSGLVVYSLDGKMLHSYNTGKLNNVDIRYDFPLNGKKVDIAAASNRSEGKNTIEIYAIDGKNGTLQSMTDPDHPIATAINEVYGFTLYHSQKTGKYYAMVTGKEGEFEQYELKADKNGYISGKKVRAFKMNSQTEGMAADDEYGRLYIAEEDEAIWKFSAEPDGGSNGTVIDRADGRHLTRDIEGLTIYYAADGKGYLMASSQGNSSYAIYDRQGKNKYVADFRITDGPETDGTSDTDGIDVLGFGLGPEYPFGIFVAQDGENIDHGQKANQNFKIVPWERIADQIGFRPLANEQVDPRKLTDRSGK.

Residues 1–26 (MNHSKTLLLTAAAGLMLTCGAVSSQA) form the signal peptide. The propeptide occupies 27 to 29 (KHK). In terms of domain architecture, BPP spans 30 to 362 (LSDPYHFTVN…VPWERIADQI (333 aa)).

The cofactor is Ca(2+).

It is found in the secreted. It catalyses the reaction 1D-myo-inositol hexakisphosphate + H2O = 1D-myo-inositol 1,2,4,5,6-pentakisphosphate + phosphate. Functionally, catalyzes the hydrolysis of inorganic orthophosphate from phytate. Only phytate, ADP, and ATP were hydrolyzed (100, 75, and 50% of the relative activity, respectively). The chain is 3-phytase (phyC) from Bacillus subtilis.